The sequence spans 820 residues: Leucine--tRNA ligase (820 aa).

The 'HIGH' region motif lies at 40-51 (PYPSGAGLHVGH). The short motif at 601-605 (KMSKS) is the 'KMSKS' region element. Position 604 (lysine 604) interacts with ATP.

Belongs to the class-I aminoacyl-tRNA synthetase family.

Its subcellular location is the cytoplasm. It catalyses the reaction tRNA(Leu) + L-leucine + ATP = L-leucyl-tRNA(Leu) + AMP + diphosphate. The chain is Leucine--tRNA ligase from Chlamydia pneumoniae (Chlamydophila pneumoniae).